We begin with the raw amino-acid sequence, 232 residues long: Large ribosomal subunit protein uL1 (232 aa).

Belongs to the universal ribosomal protein uL1 family. As to quaternary structure, part of the 50S ribosomal subunit.

Functionally, binds directly to 23S rRNA. The L1 stalk is quite mobile in the ribosome, and is involved in E site tRNA release. Its function is as follows. Protein L1 is also a translational repressor protein, it controls the translation of the L11 operon by binding to its mRNA. The protein is Large ribosomal subunit protein uL1 of Aromatoleum aromaticum (strain DSM 19018 / LMG 30748 / EbN1) (Azoarcus sp. (strain EbN1)).